Reading from the N-terminus, the 24-residue chain is Brevinin-1Bf (24 aa).

C18 and C24 are joined by a disulfide.

In terms of tissue distribution, expressed by the skin glands.

Its subcellular location is the secreted. Antibacterial activity against Gram-positive bacterium S.aureus and Gram-negative bacterium E.coli. The chain is Brevinin-1Bf from Lithobates berlandieri (Rio Grande leopard frog).